Reading from the N-terminus, the 145-residue chain is D-aminoacyl-tRNA deacylase (145 aa).

The Gly-cisPro motif, important for rejection of L-amino acids signature appears at 137 to 138 (GP).

It belongs to the DTD family. In terms of assembly, homodimer.

It is found in the cytoplasm. It carries out the reaction glycyl-tRNA(Ala) + H2O = tRNA(Ala) + glycine + H(+). The enzyme catalyses a D-aminoacyl-tRNA + H2O = a tRNA + a D-alpha-amino acid + H(+). In terms of biological role, an aminoacyl-tRNA editing enzyme that deacylates mischarged D-aminoacyl-tRNAs. Also deacylates mischarged glycyl-tRNA(Ala), protecting cells against glycine mischarging by AlaRS. Acts via tRNA-based rather than protein-based catalysis; rejects L-amino acids rather than detecting D-amino acids in the active site. By recycling D-aminoacyl-tRNA to D-amino acids and free tRNA molecules, this enzyme counteracts the toxicity associated with the formation of D-aminoacyl-tRNA entities in vivo and helps enforce protein L-homochirality. This is D-aminoacyl-tRNA deacylase from Legionella pneumophila (strain Paris).